The sequence spans 404 residues: Sulfate adenylyltransferase (404 aa).

It belongs to the sulfate adenylyltransferase family.

It catalyses the reaction sulfate + ATP + H(+) = adenosine 5'-phosphosulfate + diphosphate. It functions in the pathway sulfur metabolism; hydrogen sulfide biosynthesis; sulfite from sulfate: step 1/3. This Chlorobium chlorochromatii (strain CaD3) protein is Sulfate adenylyltransferase.